The following is an 864-amino-acid chain: MQYPFQEVESFWQKFWEENKSFQTNIRSSKPKFYCLDMFPYPSGAGLHVGHPEGYTATDILSRFKRMKGFEVLHPMGWDAFGLPAERYAMQTGIHPAITTKNNIDNFRRQIQMIGLSYDWSRELSTTDPDYYKFTQWIFIQLYQSWFNPELKKAESIETLIQRFSNKGSADLDYKPFSAQEWKQFSLVEKEKILSDFRLVYQAEIPVNWCEALGTVLANEEVEEWIDKGYEVVRKPMRQYMMRITAYADRLLEDLKLVQWPSSTLEMQKNWIGKSEGLEITFPFKKPLKSGSDGIRIFTTRPDTIFGVTYMVVAPEHPIVSEITTPEQKQKVEEYQKVSSLKSDLDRMELTKEKTGVFTGSFVLNPANPSKEIPIWISDYVLYGYGTGAIMAVPAHDQRDYEFAKTFGLEILPVIEGEITDVAFDSKTSICIHSSSSEISIDGLDYSSASSKIISWAESKRIGKKKTQFKLRDWLFARQRYWGEPIPLVHYPSGITKPIPESELPLELPPNLEEFKPSGTGESPLALAKEWLQYKDPETGEIGTRETNTMPQWAGSCWYYLRYIDPKNGKLFCDPDLEKKWMPVDLYVGGAEHAVLHLLYSRFWHKFLYDIGVVSTQEPFAKLIHQGLILGEDKRKMSKSLGNVINPDDVIRKYGADSLRLFEMFMGPLEMVKPWSTRGVEGVFRFLNRVWRLFHTGEGESFRLDEIEPTTEELKILHKTIQKVGEDIPNFSFNTAISQLMIFVNEFTPSDRRPKEVLETFILLLAPFAPHIAEELWKRSGNNKSLSTEKFPEADPQYLVESEILIVVQVNGKLRDEFKAPKDVSEADAISIAKNLDKIKGILDGKTIRKEIYVPGKLINLVIG.

Residues 40-51 (PYPSGAGLHVGH) carry the 'HIGH' region motif. The short motif at 636–640 (KMSKS) is the 'KMSKS' region element. Position 639 (Lys-639) interacts with ATP.

This sequence belongs to the class-I aminoacyl-tRNA synthetase family.

The protein resides in the cytoplasm. It catalyses the reaction tRNA(Leu) + L-leucine + ATP = L-leucyl-tRNA(Leu) + AMP + diphosphate. This Leptospira borgpetersenii serovar Hardjo-bovis (strain JB197) protein is Leucine--tRNA ligase.